A 103-amino-acid chain; its full sequence is Pyrimidine/purine nucleoside phosphorylase (103 aa).

It belongs to the nucleoside phosphorylase PpnP family.

The catalysed reaction is a purine D-ribonucleoside + phosphate = a purine nucleobase + alpha-D-ribose 1-phosphate. The enzyme catalyses adenosine + phosphate = alpha-D-ribose 1-phosphate + adenine. It catalyses the reaction cytidine + phosphate = cytosine + alpha-D-ribose 1-phosphate. It carries out the reaction guanosine + phosphate = alpha-D-ribose 1-phosphate + guanine. The catalysed reaction is inosine + phosphate = alpha-D-ribose 1-phosphate + hypoxanthine. The enzyme catalyses thymidine + phosphate = 2-deoxy-alpha-D-ribose 1-phosphate + thymine. It catalyses the reaction uridine + phosphate = alpha-D-ribose 1-phosphate + uracil. It carries out the reaction xanthosine + phosphate = alpha-D-ribose 1-phosphate + xanthine. In terms of biological role, catalyzes the phosphorolysis of diverse nucleosides, yielding D-ribose 1-phosphate and the respective free bases. Can use uridine, adenosine, guanosine, cytidine, thymidine, inosine and xanthosine as substrates. Also catalyzes the reverse reactions. This Dechloromonas aromatica (strain RCB) protein is Pyrimidine/purine nucleoside phosphorylase.